The chain runs to 771 residues: Kojibiose phosphorylase (771 aa).

358-359 contacts substrate; sequence WD. The Proton donor role is filled by Glu-498. 611–612 provides a ligand contact to substrate; the sequence is KQ.

Belongs to the glycosyl hydrolase 65 family.

It carries out the reaction kojibiose + phosphate = beta-D-glucose 1-phosphate + D-glucose. Catalyzes the reversible phosphorolysis of kojibiose into beta-D-glucose 1-phosphate (Glc1P) and D-glucose. The polypeptide is Kojibiose phosphorylase (kojP) (Caldanaerobacter subterraneus subsp. tengcongensis (strain DSM 15242 / JCM 11007 / NBRC 100824 / MB4) (Thermoanaerobacter tengcongensis)).